Consider the following 193-residue polypeptide: Putative manganese efflux pump MntP (193 aa).

6 consecutive transmembrane segments (helical) span residues 6–26 (VVFVALALSADCFAVSIGIAC), 39–59 (VAGTFGLFQAGMAVIGYYAGL), 61–81 (IADVISSFDHWVAFGLLTVIG), 106–126 (LGLLGVAIATSIDALAVGLTF), 132–152 (NIGLAALLVGAVSLAVSYLGF), and 165–185 (WVGIAGGLILCLIGLKILAEH).

It belongs to the MntP (TC 9.B.29) family.

Its subcellular location is the cell membrane. In terms of biological role, probably functions as a manganese efflux pump. This chain is Putative manganese efflux pump MntP, found in Dehalococcoides mccartyi (strain ATCC BAA-2266 / KCTC 15142 / 195) (Dehalococcoides ethenogenes (strain 195)).